The chain runs to 218 residues: Peptide methionine sulfoxide reductase MsrA (218 aa).

The active site involves cysteine 57.

Belongs to the MsrA Met sulfoxide reductase family.

It catalyses the reaction L-methionyl-[protein] + [thioredoxin]-disulfide + H2O = L-methionyl-(S)-S-oxide-[protein] + [thioredoxin]-dithiol. The enzyme catalyses [thioredoxin]-disulfide + L-methionine + H2O = L-methionine (S)-S-oxide + [thioredoxin]-dithiol. In terms of biological role, has an important function as a repair enzyme for proteins that have been inactivated by oxidation. Catalyzes the reversible oxidation-reduction of methionine sulfoxide in proteins to methionine. This Brucella abortus (strain S19) protein is Peptide methionine sulfoxide reductase MsrA.